The chain runs to 420 residues: MDKRFYSFFNLTEDQAIAILDTPQDQIGEDDSRYIAASHLVNFNSERSIAALMRAIHHTDPEMENRIVRRKAVETLGRLRATVALPVIRECLSDPDCYMIENAVWAIGEIGTEDPEILQEIMLLLDRSEQTYRVIIQTLAKLDYKPAIAKIKPFTTDESLPISSAAITALCRLNRDFSQMDQIVTLLQNRNVIARRLSIQDLIDANYYAAIPDISRCPVSLVFRLRGIGMLSEAGIQEGAIAFVDIQPYLEKSLIDHPSSLSLVHSYDTLPDLSFLIHELYETDFGRCYTAIKTILENYAESAPEALFNTYEQEAKNDYGAHFHVMKLFPWLRHAPAYNLLIEALHNKQPQFQKSRAAAAIALAEIGDPRAIPEIKSCLTAQIWDLKYASLLALEKFGDRSGYELLANDDDLLIREKRNS.

This is an uncharacterized protein from Pseudanabaena tenuis (strain PCC 7409).